We begin with the raw amino-acid sequence, 291 residues long: 4-diphosphocytidyl-2-C-methyl-D-erythritol kinase (291 aa).

The active site involves lysine 10. 99-109 (PMGGGLGGGSS) serves as a coordination point for ATP. Aspartate 141 is an active-site residue.

It belongs to the GHMP kinase family. IspE subfamily. As to quaternary structure, homodimer.

It catalyses the reaction 4-CDP-2-C-methyl-D-erythritol + ATP = 4-CDP-2-C-methyl-D-erythritol 2-phosphate + ADP + H(+). Its pathway is isoprenoid biosynthesis; isopentenyl diphosphate biosynthesis via DXP pathway; isopentenyl diphosphate from 1-deoxy-D-xylulose 5-phosphate: step 3/6. Its function is as follows. Catalyzes the phosphorylation of the position 2 hydroxy group of 4-diphosphocytidyl-2C-methyl-D-erythritol. This is 4-diphosphocytidyl-2-C-methyl-D-erythritol kinase from Proteus mirabilis (strain HI4320).